Reading from the N-terminus, the 735-residue chain is Trafficking protein particle complex subunit 12 (735 aa).

Disordered regions lie at residues 1–204 (MEDA…QPSP) and 237–276 (NPGA…PPAS). Residues 13 to 22 (PEAPHPPQLA) show a composition bias toward pro residues. Positions 34-50 (ETIDLGGDEFGSEENET) are enriched in acidic residues. A phosphoserine mark is found at serine 109 and serine 184. TPR repeat units follow at residues 545–578 (GRVM…YPEQ), 580–613 (PQLL…TQKL), 620–653 (IMVL…DPRN), and 654–687 (AVAN…DPRH).

In terms of assembly, component of the multisubunit TRAPP (transport protein particle) complex, which includes at least TRAPPC2, TRAPPC2L, TRAPPC3, TRAPPC3L, TRAPPC4, TRAPPC5, TRAPPC8, TRAPPC9, TRAPPC10, TRAPPC11 and TRAPPC12. Interacts with CENPE. Post-translationally, phosphorylated as the cells enter mitosis but is dephosphorylated at or before the onset of anaphase. The phosphorylated form recruits CENPE to kinetochores more efficiently than the non-phosphorylated form.

It localises to the endoplasmic reticulum-Golgi intermediate compartment. The protein localises to the nucleus. In terms of biological role, component of the TRAPP complex, which is involved in endoplasmic reticulum to Golgi apparatus trafficking at a very early stage. Also plays a role in chromosome congression, kinetochore assembly and stability and controls the recruitment of CENPE to the kinetochores. In Homo sapiens (Human), this protein is Trafficking protein particle complex subunit 12.